Here is a 152-residue protein sequence, read N- to C-terminus: Transcriptional regulator MraZ (152 aa).

SpoVT-AbrB domains follow at residues 5–52 (ASAI…PIHE) and 81–124 (AHEC…DEAA).

Belongs to the MraZ family. As to quaternary structure, forms oligomers.

The protein resides in the cytoplasm. The protein localises to the nucleoid. The chain is Transcriptional regulator MraZ from Shewanella pealeana (strain ATCC 700345 / ANG-SQ1).